Consider the following 356-residue polypeptide: Phospho-N-acetylmuramoyl-pentapeptide-transferase (356 aa).

10 helical membrane passes run 25-45 (TIAA…SIIA), 70-90 (GTPT…AFLW), 93-113 (LSNI…AIGF), 138-158 (FFVA…GFAL), 164-184 (YLIH…VATG), 195-215 (GLAI…AYLC), 235-255 (LAVL…FNAP), 258-278 (AIFM…TVAV), 284-304 (IVLV…VIQV), and 333-353 (QVVI…LSTL).

Belongs to the glycosyltransferase 4 family. MraY subfamily. Mg(2+) is required as a cofactor.

Its subcellular location is the cell inner membrane. The enzyme catalyses UDP-N-acetyl-alpha-D-muramoyl-L-alanyl-gamma-D-glutamyl-meso-2,6-diaminopimeloyl-D-alanyl-D-alanine + di-trans,octa-cis-undecaprenyl phosphate = di-trans,octa-cis-undecaprenyl diphospho-N-acetyl-alpha-D-muramoyl-L-alanyl-D-glutamyl-meso-2,6-diaminopimeloyl-D-alanyl-D-alanine + UMP. Its pathway is cell wall biogenesis; peptidoglycan biosynthesis. Catalyzes the initial step of the lipid cycle reactions in the biosynthesis of the cell wall peptidoglycan: transfers peptidoglycan precursor phospho-MurNAc-pentapeptide from UDP-MurNAc-pentapeptide onto the lipid carrier undecaprenyl phosphate, yielding undecaprenyl-pyrophosphoryl-MurNAc-pentapeptide, known as lipid I. This chain is Phospho-N-acetylmuramoyl-pentapeptide-transferase, found in Bartonella tribocorum (strain CIP 105476 / IBS 506).